The following is a 383-amino-acid chain: Corticosteroid-binding globulin (383 aa).

2 N-linked (GlcNAc...) asparagine glycosylation sites follow: Asn-74 and Asn-154. Gln-232 contacts cortisol. Residue Asn-238 is glycosylated (N-linked (GlcNAc...) asparagine). Gln-264 provides a ligand contact to cortisol. N-linked (GlcNAc...) asparagine glycosylation is present at Asn-308. Position 371 (Trp-371) interacts with cortisol.

The protein belongs to the serpin family. In terms of tissue distribution, produced and secreted by hepatocytes, but has also been identified in a number of glycocorticoid responsive cells (it is found in maternal lung, spleen, and ovary and fetal kidney).

The protein localises to the secreted. Functionally, major transport protein for glucocorticoids and progestins in the blood of almost all vertebrate species. This chain is Corticosteroid-binding globulin (SERPINA6), found in Oryctolagus cuniculus (Rabbit).